The sequence spans 475 residues: Aspartyl/glutamyl-tRNA(Asn/Gln) amidotransferase subunit B (475 aa).

The protein belongs to the GatB/GatE family. GatB subfamily. Heterotrimer of A, B and C subunits.

It carries out the reaction L-glutamyl-tRNA(Gln) + L-glutamine + ATP + H2O = L-glutaminyl-tRNA(Gln) + L-glutamate + ADP + phosphate + H(+). The enzyme catalyses L-aspartyl-tRNA(Asn) + L-glutamine + ATP + H2O = L-asparaginyl-tRNA(Asn) + L-glutamate + ADP + phosphate + 2 H(+). In terms of biological role, allows the formation of correctly charged Asn-tRNA(Asn) or Gln-tRNA(Gln) through the transamidation of misacylated Asp-tRNA(Asn) or Glu-tRNA(Gln) in organisms which lack either or both of asparaginyl-tRNA or glutaminyl-tRNA synthetases. The reaction takes place in the presence of glutamine and ATP through an activated phospho-Asp-tRNA(Asn) or phospho-Glu-tRNA(Gln). In Staphylococcus haemolyticus (strain JCSC1435), this protein is Aspartyl/glutamyl-tRNA(Asn/Gln) amidotransferase subunit B.